Reading from the N-terminus, the 284-residue chain is Bifunctional protein FolD (284 aa).

166-168 is a binding site for NADP(+); it reads GAS.

The protein belongs to the tetrahydrofolate dehydrogenase/cyclohydrolase family. As to quaternary structure, homodimer.

The catalysed reaction is (6R)-5,10-methylene-5,6,7,8-tetrahydrofolate + NADP(+) = (6R)-5,10-methenyltetrahydrofolate + NADPH. The enzyme catalyses (6R)-5,10-methenyltetrahydrofolate + H2O = (6R)-10-formyltetrahydrofolate + H(+). Its pathway is one-carbon metabolism; tetrahydrofolate interconversion. Functionally, catalyzes the oxidation of 5,10-methylenetetrahydrofolate to 5,10-methenyltetrahydrofolate and then the hydrolysis of 5,10-methenyltetrahydrofolate to 10-formyltetrahydrofolate. The polypeptide is Bifunctional protein FolD (Legionella pneumophila subsp. pneumophila (strain Philadelphia 1 / ATCC 33152 / DSM 7513)).